The sequence spans 251 residues: tRNA pseudouridine synthase A (251 aa).

The active-site Nucleophile is D26. Position 98 (Y98) interacts with substrate.

This sequence belongs to the tRNA pseudouridine synthase TruA family. As to quaternary structure, homodimer.

The catalysed reaction is uridine(38/39/40) in tRNA = pseudouridine(38/39/40) in tRNA. Formation of pseudouridine at positions 38, 39 and 40 in the anticodon stem and loop of transfer RNAs. This chain is tRNA pseudouridine synthase A, found in Mycolicibacterium paratuberculosis (strain ATCC BAA-968 / K-10) (Mycobacterium paratuberculosis).